The following is a 260-amino-acid chain: NADH-ubiquinone oxidoreductase chain 6 (260 aa).

6 helical membrane passes run 2–22 (LTNYLLIIFCFLALFCSFMII), 30–50 (SILYLILVFCNVTFVLIILGV), 52–72 (FIAIIFLIVYVGAIAVLFLFV), 101–121 (FLFQLFTFVFNFSVVEVFGLF), 142–162 (VPSGLLINGIYIFPNLSNLGI), and 211–231 (FFIFLVVSLILLISMIGSIIL).

The protein belongs to the complex I subunit 6 family.

The protein resides in the mitochondrion membrane. It carries out the reaction a ubiquinone + NADH + 5 H(+)(in) = a ubiquinol + NAD(+) + 4 H(+)(out). In terms of biological role, core subunit of the mitochondrial membrane respiratory chain NADH dehydrogenase (Complex I) that is believed to belong to the minimal assembly required for catalysis. Complex I functions in the transfer of electrons from NADH to the respiratory chain. The immediate electron acceptor for the enzyme is believed to be ubiquinone. The chain is NADH-ubiquinone oxidoreductase chain 6 (ND6) from Acanthamoeba castellanii (Amoeba).